A 467-amino-acid polypeptide reads, in one-letter code: Dynactin subunit 4 (467 aa).

A2 carries the post-translational modification N-acetylalanine. The stretch at 152–172 (QQLAQKEKVERDRKKLARRRN) forms a coiled coil. A Phosphoserine modification is found at S203. K222 participates in a covalent cross-link: Glycyl lysine isopeptide (Lys-Gly) (interchain with G-Cter in SUMO2). T414 is modified (phosphothreonine).

It belongs to the dynactin subunit 4 family. In terms of assembly, subunit of dynactin, a multiprotein complex part of a tripartite complex with dynein and a adapter, such as BICDL1, BICD2 or HOOK3. The dynactin complex is built around ACTR1A/ACTB filament and consists of an actin-related filament composed of a shoulder domain, a pointed end and a barbed end. Its length is defined by its flexible shoulder domain. The soulder is composed of 2 DCTN1 subunits, 4 DCTN2 and 2 DCTN3. The 4 DCNT2 (via N-terminus) bind the ACTR1A filament and act as molecular rulers to determine the length. The pointed end is important for binding dynein-dynactin cargo adapters. Consists of 4 subunits: ACTR10, DCNT4, DCTN5 and DCTN6. The barbed end is composed of a CAPZA1:CAPZB heterodimers, which binds ACTR1A/ACTB filament and dynactin and stabilizes dynactin. Interacts with ATP7B, but not ATP7A, in a copper-dependent manner. Interacts with ANK2; this interaction is required for localization at costameres. Interacts with N4BP2L1.

Its subcellular location is the cytoplasm. The protein localises to the cytoskeleton. It localises to the microtubule organizing center. The protein resides in the centrosome. It is found in the stress fiber. Its subcellular location is the cell cortex. The protein localises to the myofibril. It localises to the sarcomere. Part of the dynactin complex that activates the molecular motor dynein for ultra-processive transport along microtubules. In Mus musculus (Mouse), this protein is Dynactin subunit 4 (Dctn4).